Consider the following 329-residue polypeptide: DNA repair and recombination protein RadA (329 aa).

107-114 provides a ligand contact to ATP; that stretch reads GEFGSGKS.

It belongs to the eukaryotic RecA-like protein family.

Functionally, involved in DNA repair and in homologous recombination. Binds and assemble on single-stranded DNA to form a nucleoprotein filament. Hydrolyzes ATP in a ssDNA-dependent manner and promotes DNA strand exchange between homologous DNA molecules. This is DNA repair and recombination protein RadA from Methanocorpusculum labreanum (strain ATCC 43576 / DSM 4855 / Z).